Consider the following 119-residue polypeptide: FAD-linked sulfhydryl oxidase (119 aa).

The ERV/ALR sulfhydryl oxidase domain maps to 1–97 (MLHWGPKFWR…ISWSEYKNIY (97 aa)). Residues Cys44 and Cys47 are joined by a disulfide bond.

It belongs to the asfivirus B119L family. In terms of assembly, interacts with A151R. FAD is required as a cofactor.

It is found in the host cytoplasm. The protein resides in the virion. The enzyme catalyses 2 R'C(R)SH + O2 = R'C(R)S-S(R)CR' + H2O2. FAD-dependent sulfhydryl oxidase that catalyzes the formation of disulfide bonds in viral proteins produced in the cell cytoplasm. In Ornithodoros (relapsing fever ticks), this protein is FAD-linked sulfhydryl oxidase.